The following is a 594-amino-acid chain: Aspartate--tRNA(Asp/Asn) ligase (594 aa).

Glu175 provides a ligand contact to L-aspartate. Residues 199–202 (QIYK) form an aspartate region. L-aspartate-binding residues include Arg221 and His454. 221–223 (RDE) provides a ligand contact to ATP. Glu488 provides a ligand contact to ATP. An L-aspartate-binding site is contributed by Arg495. Residue 540 to 543 (GIDR) coordinates ATP.

Belongs to the class-II aminoacyl-tRNA synthetase family. Type 1 subfamily. Homodimer.

The protein localises to the cytoplasm. It catalyses the reaction tRNA(Asx) + L-aspartate + ATP = L-aspartyl-tRNA(Asx) + AMP + diphosphate. In terms of biological role, aspartyl-tRNA synthetase with relaxed tRNA specificity since it is able to aspartylate not only its cognate tRNA(Asp) but also tRNA(Asn). Reaction proceeds in two steps: L-aspartate is first activated by ATP to form Asp-AMP and then transferred to the acceptor end of tRNA(Asp/Asn). This Chelativorans sp. (strain BNC1) protein is Aspartate--tRNA(Asp/Asn) ligase.